A 78-amino-acid polypeptide reads, in one-letter code: Beta-defensin 12 (78 aa).

Residues 1 to 27 (MALSREVFYFGFALFFIVVELPSGSWA) form the signal peptide. Disulfide bonds link cysteine 46/cysteine 73, cysteine 53/cysteine 67, and cysteine 57/cysteine 74.

This sequence belongs to the beta-defensin family. Only expressed in epididymis (caput, corpus and cauda).

It is found in the secreted. Functionally, has antibacterial activity. The sequence is that of Beta-defensin 12 (Defb12) from Mus musculus (Mouse).